Consider the following 313-residue polypeptide: Inner membrane ABC transporter permease protein YdcU (313 aa).

Residues 1–25 lie on the Cytoplasmic side of the membrane; sequence MAMNVLQSPSRPGLGKVSGFFWHNP. Residues 26-46 traverse the membrane as a helical segment; that stretch reads GLGLFLLLLGPLMWFGIVYFG. At 47 to 92 the chain is on the periplasmic side; it reads SLLTLLWQGFYTFDDFTMSVTPELTLANIRALFNPANYDIILRTLT. Residues 87-302 enclose the ABC transmembrane type-1 domain; it reads ILRTLTMAVA…PIILIALYLA (216 aa). Residues 93 to 113 form a helical membrane-spanning segment; sequence MAVAVTIASAILAFPMAWYMA. At 114–122 the chain is on the cytoplasmic side; it reads RYTSGKMKA. The chain crosses the membrane as a helical span at residues 123 to 143; it reads FFYIAVMLPMWASYIVKAYAW. Residues 144–154 lie on the Periplasmic side of the membrane; it reads TLLLAKDGVAQ. A helical membrane pass occupies residues 155–175; the sequence is WFLQHLGLEPLLTAFLTLPAV. Residues 176-187 lie on the Cytoplasmic side of the membrane; that stretch reads GGNTLSTSGLGR. The helical transmembrane segment at 188–208 threads the bilayer; that stretch reads FLVFLYIWLPFMILPVQAALE. At 209–230 the chain is on the periplasmic side; the sequence is RLPPSLLQASADLGARPRQTFR. Residues 231-251 traverse the membrane as a helical segment; it reads YVVLPLAIPGIAAGSIFTFSL. Residue Thr-252 is a topological domain, cytoplasmic. A helical transmembrane segment spans residues 253–273; it reads LGDFIVPQLVGPPGYFIGNMV. The Periplasmic portion of the chain corresponds to 274 to 283; the sequence is YSQQGAIGNM. Residues 284 to 304 form a helical membrane-spanning segment; that stretch reads PMAAAFTLVPIILIALYLAFV. Over 305–313 the chain is Cytoplasmic; that stretch reads KRLGAFDAL.

It belongs to the binding-protein-dependent transport system permease family. CysTW subfamily.

It localises to the cell inner membrane. In terms of biological role, probably part of the ABC transporter complex YdcSTUV. Probably responsible for the translocation of the substrate across the membrane. The polypeptide is Inner membrane ABC transporter permease protein YdcU (ydcU) (Escherichia coli (strain K12)).